Here is a 311-residue protein sequence, read N- to C-terminus: Acetyl-coenzyme A carboxylase carboxyl transferase subunit alpha (311 aa).

The region spanning 36 to 286 is the CoA carboxyltransferase C-terminal domain; it reads NLDKEVSKIF…GEYFLSELKK (251 aa).

The protein belongs to the AccA family. In terms of assembly, acetyl-CoA carboxylase is a heterohexamer composed of biotin carboxyl carrier protein (AccB), biotin carboxylase (AccC) and two subunits each of ACCase subunit alpha (AccA) and ACCase subunit beta (AccD).

The protein localises to the cytoplasm. The catalysed reaction is N(6)-carboxybiotinyl-L-lysyl-[protein] + acetyl-CoA = N(6)-biotinyl-L-lysyl-[protein] + malonyl-CoA. It participates in lipid metabolism; malonyl-CoA biosynthesis; malonyl-CoA from acetyl-CoA: step 1/1. In terms of biological role, component of the acetyl coenzyme A carboxylase (ACC) complex. First, biotin carboxylase catalyzes the carboxylation of biotin on its carrier protein (BCCP) and then the CO(2) group is transferred by the carboxyltransferase to acetyl-CoA to form malonyl-CoA. The sequence is that of Acetyl-coenzyme A carboxylase carboxyl transferase subunit alpha from Sulfurimonas denitrificans (strain ATCC 33889 / DSM 1251) (Thiomicrospira denitrificans (strain ATCC 33889 / DSM 1251)).